The chain runs to 350 residues: N-acetyl-gamma-glutamyl-phosphate reductase (350 aa).

Cysteine 153 is an active-site residue.

This sequence belongs to the NAGSA dehydrogenase family. Type 1 subfamily.

The protein resides in the cytoplasm. It catalyses the reaction N-acetyl-L-glutamate 5-semialdehyde + phosphate + NADP(+) = N-acetyl-L-glutamyl 5-phosphate + NADPH + H(+). It functions in the pathway amino-acid biosynthesis; L-arginine biosynthesis; N(2)-acetyl-L-ornithine from L-glutamate: step 3/4. Its function is as follows. Catalyzes the NADPH-dependent reduction of N-acetyl-5-glutamyl phosphate to yield N-acetyl-L-glutamate 5-semialdehyde. The sequence is that of N-acetyl-gamma-glutamyl-phosphate reductase from Thermosynechococcus vestitus (strain NIES-2133 / IAM M-273 / BP-1).